A 2095-amino-acid chain; its full sequence is Oxygen-regulated protein 1 (2095 aa).

2 Doublecortin domains span residues 35–117 (KRIS…VDLD) and 157–236 (RRLV…GNYD). Disordered stretches follow at residues 358–379 (GLSNNDEKNKKSSYPGKTDYGP), 643–688 (ENRK…GKIP), 863–887 (GAEVSEQHVTTRADPLASLKKPDFP), 1400–1430 (NKKKSISSDKEESRTSEEPRSITNSMTSSER), and 1572–1595 (SGYPCKASSNSHNDDSGQEKEPTR). The segment covering 1405-1419 (ISSDKEESRTSEEPR) has biased composition (basic and acidic residues). Polar residues predominate over residues 1420 to 1430 (SITNSMTSSER). Over residues 1583-1595 (HNDDSGQEKEPTR) the composition is skewed to basic and acidic residues.

Interacts (via the doublecortin domains) with microtubules. Interacts with RP1L1. Interacts with MAK. In terms of tissue distribution, expressed in the cell bodies and inner segments of photoreceptors. Not found in liver, spleen, kidney, brain, thymus, muscle, heart, lung and testis.

It localises to the cytoplasm. The protein localises to the cytoskeleton. Its subcellular location is the cilium axoneme. It is found in the cell projection. The protein resides in the cilium. It localises to the photoreceptor outer segment. Its function is as follows. Microtubule-associated protein regulating the stability and length of the microtubule-based axoneme of photoreceptors. Required for the differentiation of photoreceptor cells, it plays a role in the organization of the outer segment of rod and cone photoreceptors ensuring the correct orientation and higher-order stacking of outer segment disks along the photoreceptor axoneme. This chain is Oxygen-regulated protein 1 (Rp1), found in Mus musculus (Mouse).